A 290-amino-acid polypeptide reads, in one-letter code: HTH-type transcriptional activator RhaR (290 aa).

Positions 179–277 (DLIMSALQQS…GMTPRDYRQR (99 aa)) constitute an HTH araC/xylS-type domain. 2 consecutive DNA-binding regions (H-T-H motif) follow at residues 196-217 (ANFC…RQQT) and 244-267 (ISDI…TREA).

In terms of assembly, binds DNA as a dimer.

It is found in the cytoplasm. Its function is as follows. Activates expression of the rhaSR operon in response to L-rhamnose. This is HTH-type transcriptional activator RhaR from Yersinia pseudotuberculosis serotype O:3 (strain YPIII).